The chain runs to 513 residues: uncharacterized protein (513 aa).

Belongs to the NodU/CmcH family.

This is an uncharacterized protein from Methanocaldococcus jannaschii (strain ATCC 43067 / DSM 2661 / JAL-1 / JCM 10045 / NBRC 100440) (Methanococcus jannaschii).